The following is a 279-amino-acid chain: Putative pyruvate, phosphate dikinase regulatory protein (279 aa).

156 to 163 serves as a coordination point for ADP; it reads GVSRTSKT.

It belongs to the pyruvate, phosphate/water dikinase regulatory protein family. PDRP subfamily.

The catalysed reaction is N(tele)-phospho-L-histidyl/L-threonyl-[pyruvate, phosphate dikinase] + ADP = N(tele)-phospho-L-histidyl/O-phospho-L-threonyl-[pyruvate, phosphate dikinase] + AMP + H(+). The enzyme catalyses N(tele)-phospho-L-histidyl/O-phospho-L-threonyl-[pyruvate, phosphate dikinase] + phosphate + H(+) = N(tele)-phospho-L-histidyl/L-threonyl-[pyruvate, phosphate dikinase] + diphosphate. Bifunctional serine/threonine kinase and phosphorylase involved in the regulation of the pyruvate, phosphate dikinase (PPDK) by catalyzing its phosphorylation/dephosphorylation. The sequence is that of Putative pyruvate, phosphate dikinase regulatory protein from Maricaulis maris (strain MCS10) (Caulobacter maris).